The following is a 462-amino-acid chain: Serine carboxypeptidase-like 28 (462 aa).

The signal sequence occupies residues 1–26 (MMITKKLYQCMCLLCMVIALLDVVSS). N-linked (GlcNAc...) asparagine glycans are attached at residues Asn-49 and Asn-144. 3 disulfides stabilise this stretch: Cys-93–Cys-342, Cys-254–Cys-266, and Cys-290–Cys-311. Ser-186 is an active-site residue. Asn-256 is a glycosylation site (N-linked (GlcNAc...) asparagine). Asn-334 carries N-linked (GlcNAc...) asparagine glycosylation. Active-site residues include Asp-379 and His-434. A glycan (N-linked (GlcNAc...) asparagine) is linked at Asn-454.

It belongs to the peptidase S10 family. Expressed in seedlings, roots and senescent leaves.

The protein localises to the secreted. In terms of biological role, probable carboxypeptidase. The protein is Serine carboxypeptidase-like 28 (SCPL28) of Arabidopsis thaliana (Mouse-ear cress).